Here is a 720-residue protein sequence, read N- to C-terminus: Engulfment and cell motility protein 2 (720 aa).

Tyrosine 48 is modified (phosphotyrosine). Residues 311–485 form the ELMO domain; that stretch reads AQRDIIFELR…VVREQITRAL (175 aa). Serine 503 is modified (phosphoserine). A PH domain is found at 553–674; sequence SSFRKIGNRR…LLGKDMSSEL (122 aa). Positions 700-707 match the SH3-binding motif; it reads PEAPPPIP. Tyrosine 717 is subject to Phosphotyrosine.

As to quaternary structure, interacts with the SH3-domain of DOCK1 via its SH3-binding site. Probably part of a complex with DOCK1 and RAC1. Probably part of a complex with DOCK1 and CRK isoform CRK-II. Interacts with ARHGEF16, DOCK4 and EPHA2; mediates activation of RAC1 by EPHA2. Interacts with ADGRB3. Interacts with AUTS2; the interaction is direct. Widely expressed, with a higher expression in skeletal muscle, kidney and placenta.

Its subcellular location is the cytoplasm. It is found in the cytosol. The protein resides in the membrane. Its function is as follows. Involved in cytoskeletal rearrangements required for phagocytosis of apoptotic cells and cell motility. Acts in association with DOCK1 and CRK. Was initially proposed to be required in complex with DOCK1 to activate Rac Rho small GTPases. May enhance the guanine nucleotide exchange factor (GEF) activity of DOCK1. In Homo sapiens (Human), this protein is Engulfment and cell motility protein 2 (ELMO2).